The following is a 571-amino-acid chain: FAD-binding monooxygenase VdtE (571 aa).

Residues 44–47 (VWYW), 56–57 (DS), and Tyr62 contribute to the FAD site. 54–56 (RVD) provides a ligand contact to NADP(+). NADP(+)-binding positions include 187-193 (TGASAVQ) and 210-211 (RT).

Belongs to the FAD-binding monooxygenase family. FAD is required as a cofactor.

The enzyme catalyses 9,10-dihydroxy-7-methoxy-3-(2-oxopropyl)-1H-benzo[g]isochromen-1-one + NADPH + O2 + H(+) = methyl 2-[(3S)-9,10-dihydroxy-7-methoxy-1-oxo-1H,3H,4H-naphtho[2,3-c]pyran-3-yl]acetate + NADP(+) + H2O. It carries out the reaction (3S)-9,10-dihydroxy-7-methoxy-3-(2-oxopropyl)-1H,3H,4H-naphtho[2,3-c]pyran-1-one + NADPH + O2 + H(+) = semiviriditoxin + NADP(+) + H2O. It functions in the pathway secondary metabolite biosynthesis. Its function is as follows. FAD-binding monooxygenase; part of the gene cluster that mediates the biosynthesis of viriditoxin, one of the 'classical' secondary metabolites produced by fungi and that has antibacterial activity. The first step is performed by the polyketide synthase VdtA which condenses one acetyl-CoA and 6 malonyl-CoA units to form the heptaketide monomer backbone of viriditoxin. The product of VdtA is then O-methylated on C7 by the O-methyltransferase VdtC. The O-methyl group is important for the stereoselective coupling of the monomers at the final step of viriditoxin biosynthesis. The short-chain dehydrogenase/reductase VdtF then acts as a stereospecific reductase converting the pyrone to dihydropyrone via the reduction of the C3-C4 double bond. The FAD-binding monooxygenase VdtE then converts the ketone group into a methyl-ester group to yield semi-viriditoxin. Finally, the laccase VdtB is involved in dimerization of 2 semi-viriditoxin molecules to yield the final viriditoxin. VdtB is responsible for the regioselective 6,6'-coupling of semi-viriditoxin, which yields (M)-viriditoxin and (P)-viriditoxin at a ratio of 1:2. The non-catalytic carboxylesterase-like protein VdtD affects the stereochemistical outcome of the coupling. The highly reducing polyketide synthase VdtX is not involved in viriditoxin synthesis, but might possibly play a role in the production of additional metabolites not identified yet. This is FAD-binding monooxygenase VdtE from Byssochlamys spectabilis (Paecilomyces variotii).